We begin with the raw amino-acid sequence, 194 residues long: Small ribosomal subunit protein uS7 (194 aa).

It belongs to the universal ribosomal protein uS7 family. Part of the 30S ribosomal subunit.

One of the primary rRNA binding proteins, it binds directly to 16S rRNA where it nucleates assembly of the head domain of the 30S subunit. Is located at the subunit interface close to the decoding center. The sequence is that of Small ribosomal subunit protein uS7 from Archaeoglobus fulgidus (strain ATCC 49558 / DSM 4304 / JCM 9628 / NBRC 100126 / VC-16).